A 191-amino-acid chain; its full sequence is COP9 signalosome complex subunit 8 (191 aa).

The PCI domain maps to 6–179; sequence MMAELDEKLL…VSLVPNEQQL (174 aa).

The protein belongs to the CSN8 family. Component of the CSN complex, probably composed of cops1, cops2, cops3, cops4, cops5, cops6, cops7, cops8 and cops9.

Its subcellular location is the cytoplasm. It localises to the nucleus. Its function is as follows. Component of the COP9 signalosome complex (CSN), a complex involved in various cellular and developmental processes. The CSN complex is an essential regulator of the ubiquitin (Ubl) conjugation pathway by mediating the deneddylation of the cullin subunits of E3 ligase complexes, leading to modify the Ubl ligase activity. This Danio rerio (Zebrafish) protein is COP9 signalosome complex subunit 8 (cops8).